We begin with the raw amino-acid sequence, 286 residues long: NAD kinase (286 aa).

Aspartate 66 (proton acceptor) is an active-site residue. Residues 66 to 67 (DG), 137 to 138 (ND), arginine 148, arginine 165, aspartate 167, and 178 to 183 (TAYSMS) contribute to the NAD(+) site.

This sequence belongs to the NAD kinase family. A divalent metal cation is required as a cofactor.

The protein resides in the cytoplasm. The enzyme catalyses NAD(+) + ATP = ADP + NADP(+) + H(+). Its function is as follows. Involved in the regulation of the intracellular balance of NAD and NADP, and is a key enzyme in the biosynthesis of NADP. Catalyzes specifically the phosphorylation on 2'-hydroxyl of the adenosine moiety of NAD to yield NADP. This Chlorobium chlorochromatii (strain CaD3) protein is NAD kinase.